A 294-amino-acid polypeptide reads, in one-letter code: Nucleotide-binding protein CLL_A3342 (294 aa).

Residue 8 to 15 (GLSGAGKT) coordinates ATP. Position 59–62 (59–62 (DIRG)) interacts with GTP.

It belongs to the RapZ-like family.

Functionally, displays ATPase and GTPase activities. In Clostridium botulinum (strain Eklund 17B / Type B), this protein is Nucleotide-binding protein CLL_A3342.